Here is an 872-residue protein sequence, read N- to C-terminus: Alanine--tRNA ligase (872 aa).

Zn(2+) is bound by residues His567, His571, Cys669, and His673.

This sequence belongs to the class-II aminoacyl-tRNA synthetase family. It depends on Zn(2+) as a cofactor.

The protein resides in the cytoplasm. The enzyme catalyses tRNA(Ala) + L-alanine + ATP = L-alanyl-tRNA(Ala) + AMP + diphosphate. Its function is as follows. Catalyzes the attachment of alanine to tRNA(Ala) in a two-step reaction: alanine is first activated by ATP to form Ala-AMP and then transferred to the acceptor end of tRNA(Ala). Also edits incorrectly charged Ser-tRNA(Ala) and Gly-tRNA(Ala) via its editing domain. The polypeptide is Alanine--tRNA ligase (Streptococcus pneumoniae (strain CGSP14)).